We begin with the raw amino-acid sequence, 227 residues long: ATP synthase F(0) complex subunit a (227 aa).

6 helical membrane passes run 12–32, 69–89, 98–118, 132–152, 180–200, and 202–222; these read PTYL…ILFP, WAVL…LGLL, QLSL…IIGM, EGTP…SLFI, FVLM…LFLL, and LLEI…LSLY.

It belongs to the ATPase A chain family. As to quaternary structure, component of the ATP synthase complex composed at least of ATP5F1A/subunit alpha, ATP5F1B/subunit beta, ATP5MC1/subunit c (homooctomer), MT-ATP6/subunit a, MT-ATP8/subunit 8, ATP5ME/subunit e, ATP5MF/subunit f, ATP5MG/subunit g, ATP5MK/subunit k, ATP5MJ/subunit j, ATP5F1C/subunit gamma, ATP5F1D/subunit delta, ATP5F1E/subunit epsilon, ATP5PF/subunit F6, ATP5PB/subunit b, ATP5PD/subunit d, ATP5PO/subunit OSCP. ATP synthase complex consists of a soluble F(1) head domain (subunits alpha(3) and beta(3)) - the catalytic core - and a membrane F(0) domain - the membrane proton channel (subunits c, a, 8, e, f, g, k and j). These two domains are linked by a central stalk (subunits gamma, delta, and epsilon) rotating inside the F1 region and a stationary peripheral stalk (subunits F6, b, d, and OSCP). Interacts with DNAJC30; interaction is direct.

It is found in the mitochondrion inner membrane. It catalyses the reaction H(+)(in) = H(+)(out). Functionally, subunit a, of the mitochondrial membrane ATP synthase complex (F(1)F(0) ATP synthase or Complex V) that produces ATP from ADP in the presence of a proton gradient across the membrane which is generated by electron transport complexes of the respiratory chain. ATP synthase complex consist of a soluble F(1) head domain - the catalytic core - and a membrane F(1) domain - the membrane proton channel. These two domains are linked by a central stalk rotating inside the F(1) region and a stationary peripheral stalk. During catalysis, ATP synthesis in the catalytic domain of F(1) is coupled via a rotary mechanism of the central stalk subunits to proton translocation. With the subunit c (ATP5MC1), forms the proton-conducting channel in the F(0) domain, that contains two crucial half-channels (inlet and outlet) that facilitate proton movement from the mitochondrial intermembrane space (IMS) into the matrix. Protons are taken up via the inlet half-channel and released through the outlet half-channel, following a Grotthuss mechanism. The sequence is that of ATP synthase F(0) complex subunit a from Salmo salar (Atlantic salmon).